The sequence spans 456 residues: Flagellum-specific ATP synthase (456 aa).

ATP is bound at residue 182–189 (AGSGVGKS).

The protein belongs to the ATPase alpha/beta chains family.

The protein localises to the cytoplasm. The enzyme catalyses ATP + H2O + 4 H(+)(in) = ADP + phosphate + 5 H(+)(out). Probable catalytic subunit of a protein translocase for flagellum-specific export, or a proton translocase involved in local circuits at the flagellum. May be involved in a specialized protein export pathway that proceeds without signal peptide cleavage. This Salmonella typhimurium (strain LT2 / SGSC1412 / ATCC 700720) protein is Flagellum-specific ATP synthase (fliI).